A 211-amino-acid polypeptide reads, in one-letter code: Thiamine-phosphate synthase (211 aa).

4-amino-2-methyl-5-(diphosphooxymethyl)pyrimidine contacts are provided by residues 37–41 (QLRIK) and asparagine 69. Mg(2+)-binding residues include aspartate 70 and aspartate 89. Serine 108 contributes to the 4-amino-2-methyl-5-(diphosphooxymethyl)pyrimidine binding site. 134 to 136 (TQT) is a binding site for 2-[(2R,5Z)-2-carboxy-4-methylthiazol-5(2H)-ylidene]ethyl phosphate. Residue lysine 137 coordinates 4-amino-2-methyl-5-(diphosphooxymethyl)pyrimidine. 2-[(2R,5Z)-2-carboxy-4-methylthiazol-5(2H)-ylidene]ethyl phosphate is bound by residues glycine 166 and 186–187 (VS).

Belongs to the thiamine-phosphate synthase family. Requires Mg(2+) as cofactor.

The catalysed reaction is 2-[(2R,5Z)-2-carboxy-4-methylthiazol-5(2H)-ylidene]ethyl phosphate + 4-amino-2-methyl-5-(diphosphooxymethyl)pyrimidine + 2 H(+) = thiamine phosphate + CO2 + diphosphate. It carries out the reaction 2-(2-carboxy-4-methylthiazol-5-yl)ethyl phosphate + 4-amino-2-methyl-5-(diphosphooxymethyl)pyrimidine + 2 H(+) = thiamine phosphate + CO2 + diphosphate. The enzyme catalyses 4-methyl-5-(2-phosphooxyethyl)-thiazole + 4-amino-2-methyl-5-(diphosphooxymethyl)pyrimidine + H(+) = thiamine phosphate + diphosphate. It functions in the pathway cofactor biosynthesis; thiamine diphosphate biosynthesis; thiamine phosphate from 4-amino-2-methyl-5-diphosphomethylpyrimidine and 4-methyl-5-(2-phosphoethyl)-thiazole: step 1/1. In terms of biological role, condenses 4-methyl-5-(beta-hydroxyethyl)thiazole monophosphate (THZ-P) and 2-methyl-4-amino-5-hydroxymethyl pyrimidine pyrophosphate (HMP-PP) to form thiamine monophosphate (TMP). This chain is Thiamine-phosphate synthase, found in Escherichia coli O157:H7.